Consider the following 1990-residue polypeptide: MFRNSLKMLLTGGKSSRKNRSSDGGSEEPPDRRQSSVDSRQSRSGQGGISTESDCAFEPDYAVPPLPVSEGDAEQELGPPPSVDEAANTLMTRLGFLLGEKVTEVQPGDQYSMEVQDENQTSAITQRISPCSTLTSSTASPPASSPCSTLPPISTNATAKDCSYGAVTSPTSTLESRDSGIIATLTSYSENVERTKYAGESSKELGSGGNIKPWQSQKSSMDSCLYRVDENMTASTYSLNKIPERNLETVLSQSVQSIPLYLMPRPNSVAATSSAHLEDLAYLDEQRHTPLRTSLRMPRQSMGGARTQQDLRVRFAPYRPPDISLKPLLFEVPSITTESVFVGRDWVFHEIDAQLQSSNASVNQGVVIVGNIGFGKTAIISRLVALSCHGTRMRQIASDSPHASPKHVDANRELPLTQPPSAHSSITSGSCPGTPEMRRRQEEAMRRLASQVVAYHYCQADNAYTCLVPEFVHNVAALLCRSPQLTAYREQLLREPHLQSMLSLRSCVQDPMASFRRGVLEPLENLHKERKIPDEDFIILIDGLNEAEFHKPDYGDTIVSFLSKMIGKFPSWLKLIVTVRTSLQEITKLLPFHRIFLDRLEENEAIDQDLQAYILHRIHSSSEIQNNISLNGKMDNTTFGKLSSHLKTLSQGSYLYLKLTFDLIEKGYLVLKSSSYKVVPVSLSEVYLLQCNMKFPTQSSFDRVMPLLNVAVASLHPLTDEHIFQAINAGSIEGTLEWEDFQQRMENLSMFLIKRRDMTRMFVHPSFREWLIWREEGEKTKFLCDPRSGHTLLAFWFSRQEGKLNRQQTIELGHHILKAHIFKGLSKKVGVSSSILQGLWISYSTEGLSMALASLRNLYTPNIKVSRLLILGGANINYRTEVLNNAPILCVQSHLGYTEMVALLLEFGANVDASSESGLTPLGYAAAAGYLSIVVLLCKKRAKVDHLDKNGQCALVHAALRGHLEVVKFLIQCDWTMAGQQQGVFKKSHAIQQALIAAASMGYTEIVSYLLDLPEKDEEEVERAQINSFDSLWGETALTAAAGRGKLEVCRLLLEQGAAVAQPNRRGAVPLFSTVRQGHWQIVDLLLTHGADVNMADKQGRTPLMMAASEGHLGTVDFLLAQGASIALMDKEGLTALSWACLKGHLSVVRSLVDNGAATDHADKNGRTPLDLAAFYGDAEVVQFLVDHGAMIEHVDYSGMRPLDRAVGCRNTSVVVTLLKKGAKIGPATWAMATSKPDIMIILLSKLMEEGDMFYKKGKVKEAAQRYQYALKKFPREGFGEDLKTFRELKVSLLLNLSRCRRKMNDFGMAEEFATKALELKPKSYEAYYARARAKRSSRQFAAALEDLNEAIKLCPNNREIQRLLLRVEEECRQMQQPQQPPPPPQPQQQLPEEAEPEPQHEDIYSVQDIFEEEYLEQDVENVSIGLQTEARPSQGLPVIQSPPSSPPHRDSAYISSSPLGSHQVFDFRSSSSVGSPTRQTYQSTSPALSPTHQNSHYRPSPPHTSPAHQGGSYRFSPPPVGGQGKEYPSPPPSPLRRGPQYRASPPAESMSVYRSQSGSPVRYQQETSVSQLPGRPKSPLSKMAQRPYQMPQLPVAVPQQGLRLQPAKAQIVRSNQPSPAVHSSTVIPTGAYGQVAHSMASKYQSSQGDIGVSQSRLVYQGSIGGIVGDGRPVQHVQASLSAGAICQHGGLTKEDLPQRPSSAYRGGVRYSQTPQIGRSQSASYYPVCHSKLDLERSSSQLGSPDVSHLIRRPISVNPNEIKPHPPTPRPLLHSQSVGLRFSPSSNSISSTSNLTPTFRPSSSIQQMEIPLKPAYERSCDELSPVSPTQGGYPSEPTRSRTTPFMGIIDKTARTQQYPHLHQQNRTWAVSSVDTVLSPTSPGNLPQPESFSPPSSISNIAFYNKTNNAQNGHLLEDDYYSPHGMLANGSRGDLLERVSQASSYPDVKVARTLPVAQAYQDNLYRQLSRDSRQGQTSPIKPKRPFVESNV.

Disordered stretches follow at residues 1–85 (MFRN…SVDE) and 129–149 (SPCS…PCST). Phosphoserine is present on residues serine 169, serine 238, serine 294, and serine 400. Positions 396–442 (IASDSPHASPKHVDANRELPLTQPPSAHSSITSGSCPGTPEMRRRQE) are disordered. Residues 419 to 431 (PPSAHSSITSGSC) show a composition bias toward polar residues. 11 ANK repeats span residues 846-878 (EGLS…NINY), 884-913 (NNAP…NVDA), 917-946 (SGLT…KVDH), 950-979 (NGQC…TMAG), 990-1019 (AIQQ…KDEE), 1033-1062 (WGET…AVAQ), 1066-1095 (RGAV…DVNM), 1099-1128 (QGRT…SIAL), 1132-1161 (EGLT…ATDH), 1165-1194 (NGRT…MIEH), and 1198-1227 (SGMR…KIGP). TPR repeat units lie at residues 1244 to 1277 (LSKL…FPRE), 1291 to 1324 (VSLL…KPKS), and 1325 to 1358 (YEAY…CPNN). Disordered stretches follow at residues 1372 to 1401 (CRQM…EPQH), 1430 to 1586 (EARP…KMAQ), and 1692 to 1718 (LTKE…PQIG). A phosphoserine mark is found at serine 1442 and serine 1458. Positions 1469 to 1498 (RSSSSVGSPTRQTYQSTSPALSPTHQNSHY) are enriched in polar residues. Serine 1530 and serine 1545 each carry phosphoserine. The segment covering 1553 to 1572 (VYRSQSGSPVRYQQETSVSQ) has biased composition (polar residues). 2 positions are modified to asymmetric dimethylarginine: arginine 1563 and arginine 1576. At serine 1579 the chain carries Phosphoserine. A Phosphoserine modification is found at serine 1722. The segment covering 1783–1798 (SPSSNSISSTSNLTPT) has biased composition (low complexity). Disordered regions lie at residues 1783-1803 (SPSS…RPSS) and 1821-1843 (DELS…SRTT). Residues serine 1824 and serine 1827 each carry the phosphoserine modification. An N-linked (GlcNAc...) asparagine glycan is attached at asparagine 1928. A disordered region spans residues 1968–1990 (SRDSRQGQTSPIKPKRPFVESNV).

This sequence belongs to the TANC family. In terms of assembly, interacts with KIF1A; the interaction decreases in presence of calcium.

It localises to the cell projection. The protein localises to the dendritic spine. Functionally, scaffolding protein in the dendritic spines which acts as immobile postsynaptic posts able to recruit KIF1A-driven dense core vesicles to dendritic spines. In Homo sapiens (Human), this protein is Protein TANC2 (TANC2).